The sequence spans 633 residues: Probable methyltransferase PMT17 (633 aa).

Over 1–18 the chain is Cytoplasmic; the sequence is MAKENSGHHHQTEARRKK. A helical; Signal-anchor for type II membrane protein membrane pass occupies residues 19-39; that stretch reads LTLILGVSGLCILFYVLGAWQ. Residues 40 to 633 lie on the Lumenal side of the membrane; the sequence is ANTVPSSISK…NNNNNNNNNN (594 aa). The segment at 50–71 is disordered; the sequence is LGCETQSNPSSSSSSSSSSESA. Residues 59–70 show a composition bias toward low complexity; sequence SSSSSSSSSSES. Residue Asn-87 is glycosylated (N-linked (GlcNAc...) asparagine).

The protein belongs to the methyltransferase superfamily.

It localises to the endoplasmic reticulum membrane. In Arabidopsis thaliana (Mouse-ear cress), this protein is Probable methyltransferase PMT17.